Reading from the N-terminus, the 448-residue chain is Methylenetetrahydrofolate--tRNA-(uracil-5-)-methyltransferase TrmFO (448 aa).

10-15 (GAGLAG) is an FAD binding site.

It belongs to the MnmG family. TrmFO subfamily. FAD serves as cofactor.

Its subcellular location is the cytoplasm. It catalyses the reaction uridine(54) in tRNA + (6R)-5,10-methylene-5,6,7,8-tetrahydrofolate + NADH + H(+) = 5-methyluridine(54) in tRNA + (6S)-5,6,7,8-tetrahydrofolate + NAD(+). The enzyme catalyses uridine(54) in tRNA + (6R)-5,10-methylene-5,6,7,8-tetrahydrofolate + NADPH + H(+) = 5-methyluridine(54) in tRNA + (6S)-5,6,7,8-tetrahydrofolate + NADP(+). Catalyzes the folate-dependent formation of 5-methyl-uridine at position 54 (M-5-U54) in all tRNAs. The protein is Methylenetetrahydrofolate--tRNA-(uracil-5-)-methyltransferase TrmFO of Lactococcus lactis subsp. cremoris (strain SK11).